A 309-amino-acid chain; its full sequence is Mitogen-activated protein kinase kinase 8 (309 aa).

In terms of domain architecture, Protein kinase spans 53–305 (LDRISVLGSG…ASQLLNHPFL (253 aa)). ATP contacts are provided by residues 59-67 (LGSGNGGTV) and K82. D167 (proton acceptor) is an active-site residue. Residues S195 and S201 each carry the phosphoserine modification. At T205 the chain carries Phosphothreonine.

Belongs to the protein kinase superfamily. STE Ser/Thr protein kinase family. MAP kinase kinase subfamily. In terms of processing, phosphorylation at Ser-195 and Ser-201 by MAP kinase kinase kinases positively regulates kinase activity.

It catalyses the reaction L-seryl-[protein] + ATP = O-phospho-L-seryl-[protein] + ADP + H(+). The catalysed reaction is L-threonyl-[protein] + ATP = O-phospho-L-threonyl-[protein] + ADP + H(+). It carries out the reaction L-tyrosyl-[protein] + ATP = O-phospho-L-tyrosyl-[protein] + ADP + H(+). This chain is Mitogen-activated protein kinase kinase 8 (MKK8), found in Arabidopsis thaliana (Mouse-ear cress).